The chain runs to 776 residues: Protocadherin beta-16 (776 aa).

A signal peptide spans 1 to 28 (MEIGWMHNRRQRQVLVFFVLLSLSGAGA). Topologically, residues 29–690 (ELGSYSVVEE…TQANSLTVYL (662 aa)) are extracellular. 5 consecutive Cadherin domains span residues 35–133 (VVEE…SPMF), 138–242 (MILK…APEF), 247–347 (YKVQ…PPQV), 352–451 (LTSP…APTF), and 456–561 (YTLF…SPFV). 2 N-linked (GlcNAc...) asparagine glycosylation sites follow: N418 and N436. N-linked (GlcNAc...) asparagine glycosylation occurs at N567. The Cadherin 6 domain occupies 568–671 (GSAPCTELVP…LVDGFSQPFL (104 aa)). The chain crosses the membrane as a helical span at residues 691 to 711 (VVALASVSSLFLFSVLLFVAV). The Cytoplasmic segment spans residues 712–776 (RLCRRSRAAS…LKPIIPNFSP (65 aa)).

It is found in the membrane. Potential calcium-dependent cell-adhesion protein. May be involved in the establishment and maintenance of specific neuronal connections in the brain. The sequence is that of Protocadherin beta-16 from Homo sapiens (Human).